Reading from the N-terminus, the 158-residue chain is SKP1-like protein 18 (158 aa).

Residues 99–157 (ILAANYLNFEGLLGFASQTVADYIKDKTPEEVREIFNIENDFTPEEEEEIRKENAWTFN) are interaction with the F-box domain of F-box proteins.

The protein belongs to the SKP1 family. As to quaternary structure, part of a SCF (SKP1-cullin-F-box) protein ligase complex. Interacts with CPR1/CPR30, EBF1, SKP2A, At3g61590, At4g38940 and At5g49610. Expressed in young seedlings, roots, leaves, floral stems, inflorescences, pollen, and siliques.

The protein resides in the nucleus. It participates in protein modification; protein ubiquitination. Involved in ubiquitination and subsequent proteasomal degradation of target proteins. Together with CUL1, RBX1 and a F-box protein, it forms a SCF E3 ubiquitin ligase complex. The functional specificity of this complex depends on the type of F-box protein. In the SCF complex, it serves as an adapter that links the F-box protein to CUL1. The chain is SKP1-like protein 18 (ASK18) from Arabidopsis thaliana (Mouse-ear cress).